A 1251-amino-acid polypeptide reads, in one-letter code: Phospholipid-transporting ATPase IC (1251 aa).

Residues 1–54 are disordered; that stretch reads MSTERDSETTFDEDSQPNDEVVPYSDDETEDELDDQGSAVEPEQNRVNREAEEN. At 1–108 the chain is on the cytoplasmic side; sequence MSTERDSETT…TYKYNAFTFI (108 aa). Positions 25-35 are enriched in acidic residues; it reads SDDETEDELDD. The segment covering 43-54 has biased composition (basic and acidic residues); it reads EQNRVNREAEEN. A helical transmembrane segment spans residues 109–130; sequence PMNLFEQFKRAANLYFLALLIL. At 131–136 the chain is on the exoplasmic loop side; sequence QAVPQI. Residues 137 to 156 traverse the membrane as a helical segment; the sequence is STLAWYTTLVPLLVVLGVTA. Over 157–340 the chain is Cytoplasmic; that stretch reads IKDLVDDVAR…TKIDYLMNYM (184 aa). Residues 341–362 form a helical membrane-spanning segment; it reads VYTIFVVLILLSAGLAIGHAYW. The Exoplasmic loop segment spans residues 363–389; the sequence is EAQVGNSSWYLYDGEDDTPSYRGFLIF. A helical membrane pass occupies residues 390-411; sequence WGYIIVLNTMVPISLYVSVEVI. Topologically, residues 412 to 949 are cytoplasmic; that stretch reads RLGQSHFINW…GRWSYIRMCK (538 aa). The active-site 4-aspartylphosphate intermediate is Asp454. 12 residues coordinate ATP: Asp454, Lys455, Thr456, Glu555, Phe596, Lys619, Arg652, Thr732, Gly733, Asp734, Arg867, and Lys873. Residue Asp454 participates in Mg(2+) binding. Thr456 contributes to the Mg(2+) binding site. Asp893 is a Mg(2+) binding site. ATP-binding residues include Asn896 and Asp897. Asp897 provides a ligand contact to Mg(2+). A helical membrane pass occupies residues 950 to 970; sequence FLRYFFYKNFAFTLVHFWYSF. Over 971 to 982 the chain is Exoplasmic loop; that stretch reads FNGYSAQTAYED. The helical transmembrane segment at 983 to 1002 threads the bilayer; that stretch reads WFITLYNVLYTSLPVLLMGL. Residues 1003–1032 lie on the Cytoplasmic side of the membrane; it reads LDQDVSDKLSLRFPGLYIVGQRDLLFNYKR. Residues 1033–1054 form a helical membrane-spanning segment; it reads FFVSLLHGVLTSMILFFIPLGA. The Exoplasmic loop segment spans residues 1055 to 1068; the sequence is YLQTVGQDGEAPSD. The chain crosses the membrane as a helical span at residues 1069-1091; the sequence is YQSFAVTIASALVITVNFQIGLD. At 1092–1097 the chain is on the cytoplasmic side; sequence TSYWTF. A helical transmembrane segment spans residues 1098–1118; it reads VNAFSIFGSIALYFGIMFDFH. Topologically, residues 1119–1138 are exoplasmic loop; the sequence is SAGIHVLFPSAFQFTGTASN. A helical transmembrane segment spans residues 1139-1163; it reads ALRQPYIWLTIILAVAVCLLPVVAI. Over 1164–1251 the chain is Cytoplasmic; sequence RFLSMTIWPS…TAEYRRTGDS (88 aa). Position 1223 is a phosphoserine (Ser1223).

This sequence belongs to the cation transport ATPase (P-type) (TC 3.A.3) family. Type IV subfamily. As to quaternary structure, component of a P4-ATPase flippase complex which consists of a catalytic alpha subunit ATP8B1 and an accessory beta subunit TMEM30A. The flippase ATP8B1:TMEM30A complex can form an intermediate phosphoenzyme in vitro. Also interacts with beta subunit TMEM30B. It depends on Mg(2+) as a cofactor. As to expression, found in most tissues except brain and skeletal muscle. Most abundant in pancreas and small intestine.

The protein resides in the cell membrane. The protein localises to the apical cell membrane. Its subcellular location is the cell projection. It localises to the stereocilium. It is found in the endoplasmic reticulum. The protein resides in the golgi apparatus. It carries out the reaction ATP + H2O + phospholipidSide 1 = ADP + phosphate + phospholipidSide 2.. The enzyme catalyses a 1,2-diacyl-sn-glycero-3-phosphocholine(out) + ATP + H2O = a 1,2-diacyl-sn-glycero-3-phosphocholine(in) + ADP + phosphate + H(+). It catalyses the reaction a 1,2-diacyl-sn-glycero-3-phospho-L-serine(out) + ATP + H2O = a 1,2-diacyl-sn-glycero-3-phospho-L-serine(in) + ADP + phosphate + H(+). Catalytic component of a P4-ATPase flippase complex which catalyzes the hydrolysis of ATP coupled to the transport of phospholipids, in particular phosphatidylcholines (PC), from the outer to the inner leaflet of the plasma membrane. May participate in the establishment of the canalicular membrane integrity by ensuring asymmetric distribution of phospholipids in the canicular membrane. Thus may have a role in the regulation of bile acids transport into the canaliculus, uptake of bile acids from intestinal contents into intestinal mucosa or both and protect hepatocytes from bile salts. Involved in the microvillus formation in polarized epithelial cells; the function seems to be independent from its flippase activity. Participates in correct apical membrane localization of CDC42, CFTR and SLC10A2. Enables CDC42 clustering at the apical membrane during enterocyte polarization through the interaction between CDC42 polybasic region and negatively charged membrane lipids provided by ATP8B1. Together with TMEM30A is involved in uptake of the synthetic drug alkylphospholipid perifosine. Required for the preservation of cochlear hair cells in the inner ear. May act as cardiolipin transporter during inflammatory injury. The sequence is that of Phospholipid-transporting ATPase IC from Homo sapiens (Human).